We begin with the raw amino-acid sequence, 160 residues long: Phosphopantetheine adenylyltransferase (160 aa).

Ser9 serves as a coordination point for substrate. ATP contacts are provided by residues 9-10 and His17; that span reads SF. Residues Lys41, Thr73, and Arg87 each coordinate substrate. ATP-binding positions include 88–90, Glu98, and 123–129; these read GMR and YTFFSSS.

This sequence belongs to the bacterial CoaD family. Homohexamer. Mg(2+) is required as a cofactor.

Its subcellular location is the cytoplasm. The enzyme catalyses (R)-4'-phosphopantetheine + ATP + H(+) = 3'-dephospho-CoA + diphosphate. The protein operates within cofactor biosynthesis; coenzyme A biosynthesis; CoA from (R)-pantothenate: step 4/5. Functionally, reversibly transfers an adenylyl group from ATP to 4'-phosphopantetheine, yielding dephospho-CoA (dPCoA) and pyrophosphate. This Roseiflexus sp. (strain RS-1) protein is Phosphopantetheine adenylyltransferase.